Consider the following 360-residue polypeptide: Phospho-N-acetylmuramoyl-pentapeptide-transferase (360 aa).

Helical transmembrane passes span 24–44 (RAVM…PWTI), 69–89 (GTPT…TLLW), 92–112 (WANP…ALGF), 133–153 (MVWQ…LAAN), 158–178 (ILIV…GFLV), 199–219 (GLAT…AYAS), 239–259 (VVIF…FNAY), 263–283 (VFMG…VAVI), 288–308 (FVLV…MLQV), and 337–357 (QVVV…LSTL).

It belongs to the glycosyltransferase 4 family. MraY subfamily. Requires Mg(2+) as cofactor.

It is found in the cell inner membrane. It catalyses the reaction UDP-N-acetyl-alpha-D-muramoyl-L-alanyl-gamma-D-glutamyl-meso-2,6-diaminopimeloyl-D-alanyl-D-alanine + di-trans,octa-cis-undecaprenyl phosphate = di-trans,octa-cis-undecaprenyl diphospho-N-acetyl-alpha-D-muramoyl-L-alanyl-D-glutamyl-meso-2,6-diaminopimeloyl-D-alanyl-D-alanine + UMP. The protein operates within cell wall biogenesis; peptidoglycan biosynthesis. Catalyzes the initial step of the lipid cycle reactions in the biosynthesis of the cell wall peptidoglycan: transfers peptidoglycan precursor phospho-MurNAc-pentapeptide from UDP-MurNAc-pentapeptide onto the lipid carrier undecaprenyl phosphate, yielding undecaprenyl-pyrophosphoryl-MurNAc-pentapeptide, known as lipid I. In Neisseria meningitidis serogroup A / serotype 4A (strain DSM 15465 / Z2491), this protein is Phospho-N-acetylmuramoyl-pentapeptide-transferase.